A 1068-amino-acid polypeptide reads, in one-letter code: tRNA wybutosine-synthesizing protein 4 (1068 aa).

The interval 1–31 is disordered; that stretch reads MCPPEQPAKAMAPSKSNQAAKSAVPTKEEKS. Residues R81, G107, D134, 181-182, and E208 each bind S-adenosyl-L-methionine; that span reads DL. A JmjC domain is found at 876–1024; sequence ADFPSLSSDF…ALGRDVYGNR (149 aa).

Belongs to the methyltransferase superfamily. LCMT family.

The enzyme catalyses 7-[(3S)-3-amino-3-carboxypropyl]wyosine(37) in tRNA(Phe) + S-adenosyl-L-methionine = 7-[(3S)-(3-amino-3-methoxycarbonyl)propyl]wyosine(37) in tRNA(Phe) + S-adenosyl-L-homocysteine. The catalysed reaction is 7-[(3S)-(3-amino-3-methoxycarbonyl)propyl]wyosine(37) in tRNA(Phe) + S-adenosyl-L-methionine + CO2 = wybutosine(37) in tRNA(Phe) + S-adenosyl-L-homocysteine + 2 H(+). It participates in tRNA modification; wybutosine-tRNA(Phe) biosynthesis. In terms of biological role, probable S-adenosyl-L-methionine-dependent methyltransferase that acts as a component of the wybutosine biosynthesis pathway. Wybutosine is a hyper modified guanosine with a tricyclic base found at the 3'-position adjacent to the anticodon of eukaryotic phenylalanine tRNA. May methylate the carboxyl group of leucine residues to form alpha-leucine ester residues. The protein is tRNA wybutosine-synthesizing protein 4 (ppm2) of Emericella nidulans (strain FGSC A4 / ATCC 38163 / CBS 112.46 / NRRL 194 / M139) (Aspergillus nidulans).